The sequence spans 353 residues: Small ribosomal subunit biogenesis GTPase RsgA (353 aa).

Residues 1–17 (MSKNKLSKGQQRRVNAN) are compositionally biased toward polar residues. The segment at 1 to 25 (MSKNKLSKGQQRRVNANHQRRLKTT) is disordered. The 171-residue stretch at 104–274 (ASVLTRPDFY…VIDSPGVREF (171 aa)) folds into the CP-type G domain. GTP contacts are provided by residues 160–163 (NKID) and 214–222 (GQSGVGKSS). Residues C298, C303, H305, and C311 each coordinate Zn(2+).

This sequence belongs to the TRAFAC class YlqF/YawG GTPase family. RsgA subfamily. Monomer. Associates with 30S ribosomal subunit, binds 16S rRNA. It depends on Zn(2+) as a cofactor.

It localises to the cytoplasm. Its function is as follows. One of several proteins that assist in the late maturation steps of the functional core of the 30S ribosomal subunit. Helps release RbfA from mature subunits. May play a role in the assembly of ribosomal proteins into the subunit. Circularly permuted GTPase that catalyzes slow GTP hydrolysis, GTPase activity is stimulated by the 30S ribosomal subunit. This Klebsiella pneumoniae (strain 342) protein is Small ribosomal subunit biogenesis GTPase RsgA.